The chain runs to 453 residues: Homogentisate 1,2-dioxygenase (453 aa).

His306 acts as the Proton acceptor in catalysis. The Fe cation site is built by His349 and Glu355. 2 residues coordinate homogentisate: Tyr364 and His385. His385 is a binding site for Fe cation.

This sequence belongs to the homogentisate dioxygenase family. Hexamer; dimer of trimers. Fe cation serves as cofactor.

It catalyses the reaction homogentisate + O2 = 4-maleylacetoacetate + H(+). It functions in the pathway amino-acid degradation; L-phenylalanine degradation; acetoacetate and fumarate from L-phenylalanine: step 4/6. Functionally, involved in the catabolism of homogentisate (2,5-dihydroxyphenylacetate or 2,5-OH-PhAc), a central intermediate in the degradation of phenylalanine and tyrosine. Catalyzes the oxidative ring cleavage of the aromatic ring of homogentisate to yield maleylacetoacetate. The chain is Homogentisate 1,2-dioxygenase from Rhizobium etli (strain ATCC 51251 / DSM 11541 / JCM 21823 / NBRC 15573 / CFN 42).